Consider the following 198-residue polypeptide: Syndecan-4 (198 aa).

The first 18 residues, 1-18 (MAPARLFALLLFFVGGVA), serve as a signal peptide directing secretion. At 19–145 (ESIRETEVID…QGSNIFERTE (127 aa)) the chain is on the extracellular side. 3 O-linked (Xyl...) (glycosaminoglycan) serine glycosylation sites follow: Ser-39, Ser-61, and Ser-63. Ser-95 is a glycosylation site (O-linked (Xyl...) (chondroitin sulfate) serine). A helical membrane pass occupies residues 146 to 170 (VLAALIVGGIVGILFAVFLILLLMY). Over 171 to 198 (RMKKKDEGSYDLGKKPIYKKAPTNEFYA) the chain is Cytoplasmic.

This sequence belongs to the syndecan proteoglycan family. In terms of assembly, homodimer. Interacts (via its cytoplasmic domain) with GIPC (via its PDZ domain). Interacts (via its cytoplasmic domain) with NUDT16L1. Interacts with CDCP1 and SDCBP. Interacts with DNM2; this interaction is markedly enhanced at focal ahesion site upon induction of focal adhesions and stress-fiber formation. In terms of processing, shedding is enhanced by a number of factors such as heparanase, thrombin or EGF. Also by stress and wound healing. PMA-mediated shedding is inhibited by TIMP3. Post-translationally, O-glycosylated; contains both chondroitin sulfate and heparan sulfate. Ser-39, Ser-61 and Ser-63 can all be modified by either chondroitin sulfate or heparan sulfate, and the protein exists in forms that contain only chondroitin sulfate, only heparan sulfate and both chondroitin sulfate and heparan sulfate. As to expression, detected in fibroblasts (at protein level). Also expressed in epithelial cells.

It is found in the membrane. Its subcellular location is the secreted. Cell surface proteoglycan which regulates exosome biogenesis in concert with SDCBP and PDCD6IP. The chain is Syndecan-4 from Homo sapiens (Human).